The primary structure comprises 872 residues: Cilia- and flagella-associated protein 58 (872 aa).

Coiled coils occupy residues 106 to 595 (VDSA…ADGE) and 642 to 839 (ESQY…QKNK).

The protein belongs to the CFAP58 family. Interacts with ODFP2.

Its subcellular location is the cell projection. The protein resides in the cilium. The protein localises to the flagellum. It localises to the cytoplasm. It is found in the cytoskeleton. Its subcellular location is the microtubule organizing center. The protein resides in the centrosome. Its function is as follows. Has an essential role in the assembly and organization of the sperm flagellar axoneme. Required for the elongation of the primary cilium and sperm flagellar midpiece via modulation of the Notch signaling pathway. The sequence is that of Cilia- and flagella-associated protein 58 from Homo sapiens (Human).